The primary structure comprises 143 residues: Transcriptional regulator MraZ (143 aa).

2 consecutive SpoVT-AbrB domains span residues 5–47 (EYHH…PIEE) and 76–119 (AMES…SAER).

It belongs to the MraZ family. Forms oligomers.

Its subcellular location is the cytoplasm. The protein localises to the nucleoid. This chain is Transcriptional regulator MraZ, found in Lactobacillus johnsonii (strain CNCM I-12250 / La1 / NCC 533).